The sequence spans 344 residues: Coproporphyrin III ferrochelatase (344 aa).

S52 contacts Fe-coproporphyrin III. C113 contributes to the [2Fe-2S] cluster binding site. Position 116 (Y116) interacts with Fe-coproporphyrin III. Residues H172 and E255 each contribute to the Fe(2+) site. Residues C316, C325, and C330 each coordinate [2Fe-2S] cluster.

It belongs to the ferrochelatase family. [2Fe-2S] cluster is required as a cofactor.

Its subcellular location is the cytoplasm. The enzyme catalyses Fe-coproporphyrin III + 2 H(+) = coproporphyrin III + Fe(2+). Its pathway is porphyrin-containing compound metabolism; protoheme biosynthesis. Involved in coproporphyrin-dependent heme b biosynthesis. Catalyzes the insertion of ferrous iron into coproporphyrin III to form Fe-coproporphyrin III. This is Coproporphyrin III ferrochelatase from Mycobacterium bovis (strain ATCC BAA-935 / AF2122/97).